Here is a 422-residue protein sequence, read N- to C-terminus: Histidine--tRNA ligase (422 aa).

It belongs to the class-II aminoacyl-tRNA synthetase family. As to quaternary structure, homodimer.

Its subcellular location is the cytoplasm. It catalyses the reaction tRNA(His) + L-histidine + ATP = L-histidyl-tRNA(His) + AMP + diphosphate + H(+). The chain is Histidine--tRNA ligase from Vibrio cholerae serotype O1 (strain ATCC 39541 / Classical Ogawa 395 / O395).